A 458-amino-acid polypeptide reads, in one-letter code: MTKTIKLLTYNVFIRPPGIKNNENDWKDERIECLISDSLSPHINYNKGSKSAQGIPNAVYSVDKTSFPYIPYFSPWKYPVYGKLMEVTGMNKKAKSPPPPSSLKQQNLHNNSSDYQSIAPSKSILAQYDIICLQELFSAFSYRQRRFIEKAEQQGFQYYATSPSPPYLRSTFLVDGGLTVISKYPIVASDFFLYEQGVDSDMLSSKGVLYTKIKVVPTGSSNDDENFIHLFTTHMQASYAPKSDGSKTVKASATQDQASNYKNDNIRLIQLNQLREFIFEKTFKDKSIIILAGDLNVNGRVSKDDPKDGDSYLQMLELLSNSDQRDLPTGKKIFTIQDLLRDDFNGEHPPTVGDIKFLKDKKQEIPLETVLTNPNDFGCMKRLDYILLFNREFETSIDGVELNFKVPSPTQPSKHSQQHNSISPLKGSTKVDPFFIQGFPFTQLSDHYGVSTILQINK.

Residues 91–111 are disordered; the sequence is NKKAKSPPPPSSLKQQNLHNN. A Mg(2+)-binding site is contributed by E135. Residue H447 is the Proton acceptor of the active site.

It belongs to the neutral sphingomyelinase family. Mg(2+) is required as a cofactor.

The enzyme catalyses a sphingomyelin + H2O = phosphocholine + an N-acylsphing-4-enine + H(+). The protein operates within lipid metabolism; sphingolipid metabolism. In terms of biological role, catalyzes the hydrolysis of sphingomyelin to form ceramide and phosphocholine. The polypeptide is Sphingomyelinase DDB_G0288017 (Dictyostelium discoideum (Social amoeba)).